The chain runs to 480 residues: Aspartyl/glutamyl-tRNA(Asn/Gln) amidotransferase subunit B (480 aa).

This sequence belongs to the GatB/GatE family. GatB subfamily. In terms of assembly, heterotrimer of A, B and C subunits.

It carries out the reaction L-glutamyl-tRNA(Gln) + L-glutamine + ATP + H2O = L-glutaminyl-tRNA(Gln) + L-glutamate + ADP + phosphate + H(+). The catalysed reaction is L-aspartyl-tRNA(Asn) + L-glutamine + ATP + H2O = L-asparaginyl-tRNA(Asn) + L-glutamate + ADP + phosphate + 2 H(+). Its function is as follows. Allows the formation of correctly charged Asn-tRNA(Asn) or Gln-tRNA(Gln) through the transamidation of misacylated Asp-tRNA(Asn) or Glu-tRNA(Gln) in organisms which lack either or both of asparaginyl-tRNA or glutaminyl-tRNA synthetases. The reaction takes place in the presence of glutamine and ATP through an activated phospho-Asp-tRNA(Asn) or phospho-Glu-tRNA(Gln). This chain is Aspartyl/glutamyl-tRNA(Asn/Gln) amidotransferase subunit B, found in Streptococcus thermophilus (strain ATCC BAA-250 / LMG 18311).